Here is a 1438-residue protein sequence, read N- to C-terminus: DNA polymerase III PolC-type (1438 aa).

Positions 422–578 (YVVFDVETTG…YDTEATAYIF (157 aa)) constitute an Exonuclease domain.

Belongs to the DNA polymerase type-C family. PolC subfamily.

It localises to the cytoplasm. It carries out the reaction DNA(n) + a 2'-deoxyribonucleoside 5'-triphosphate = DNA(n+1) + diphosphate. Required for replicative DNA synthesis. This DNA polymerase also exhibits 3' to 5' exonuclease activity. This is DNA polymerase III PolC-type from Staphylococcus aureus (strain bovine RF122 / ET3-1).